Here is a 458-residue protein sequence, read N- to C-terminus: Exodeoxyribonuclease 7 large subunit (458 aa).

Belongs to the XseA family. As to quaternary structure, heterooligomer composed of large and small subunits.

Its subcellular location is the cytoplasm. It carries out the reaction Exonucleolytic cleavage in either 5'- to 3'- or 3'- to 5'-direction to yield nucleoside 5'-phosphates.. Functionally, bidirectionally degrades single-stranded DNA into large acid-insoluble oligonucleotides, which are then degraded further into small acid-soluble oligonucleotides. This is Exodeoxyribonuclease 7 large subunit from Sodalis glossinidius (strain morsitans).